Reading from the N-terminus, the 585-residue chain is Vacuolar protein 8 (585 aa).

Glycine 2 carries N-myristoyl glycine lipidation. Residues cysteine 4, cysteine 5, and cysteine 7 are each lipidated (S-palmitoyl cysteine). ARM repeat units lie at residues 39 to 76, 77 to 116, 118 to 157, 159 to 198, 200 to 239, 243 to 282, 284 to 323, 325 to 365, and 409 to 448; these read NRSD…FAEI, TEKD…NLAV, TENK…NLAT, DDNK…NMTH, GENR…NIAV, NRKK…NLAS, SGYQ…NISI, PLNE…NLAA, and DDLK…NLCS. Over residues 531–562 the composition is skewed to low complexity; that stretch reads QIGQTTTTTTTNITNNNTNTNTNTNTTTSTSN. The interval 531 to 565 is disordered; that stretch reads QIGQTTTTTTTNITNNNTNTNTNTNTTTSTSNEDQ.

It belongs to the beta-catenin family.

It localises to the vacuole membrane. Functions in both vacuole inheritance and protein targeting from the cytoplasm to vacuole. Vacuole inheritance has a role in the regulation of hyphal cell division. The protein is Vacuolar protein 8 (VAC8) of Candida albicans (strain SC5314 / ATCC MYA-2876) (Yeast).